We begin with the raw amino-acid sequence, 215 residues long: Ras-related protein Rab-5A (215 aa).

GTP contacts are provided by Ser29, Ala30, Gly32, Lys33, Ser34, Ser35, His46, Glu47, Thr52, and Gly78. Ser34 is a binding site for Mg(2+). 2 consecutive short sequence motifs (switch) follow at residues 44–56 and 77–93; these read QFHE…IGAA and AGQE…YRGA. Mg(2+) is bound at residue Thr52. Phosphoserine is present on Ser84. The GTP site is built by Asn133, Lys134, Asp136, Ala164, and Lys165. The interval 181–215 is disordered; sequence LPKNEPQNPGANSARGRGVDLTEPTQPTRSQCCSN. The segment covering 203–215 has biased composition (polar residues); it reads EPTQPTRSQCCSN. 2 S-geranylgeranyl cysteine lipidation sites follow: Cys212 and Cys213.

This sequence belongs to the small GTPase superfamily. Rab family. In terms of assembly, interacts with GDI1; this promotes dissociation from membranes; phosphorylation at Ser-84 disrupts this interaction. Interacts with GDI2; phosphorylation at Ser-84 disrupts the interaction. Binds EEA1. Interacts with ALS2CL, SUN2, ZFYVE20 and RUFY1. Interacts with RIN1 and GAPVD1, which regulate its pathway, probably by acting as a GEF. Interacts with SGSM1 and SGSM3. Interacts with PIK3CB. Interacts with RABEP1 and RINL. Interacts with OCRL and INPP5F. May be a component of a complex composed of RAB5A, DYN2 and PIK3C3. Does not interact with the BLOC-3 complex (heterodimer of HPS1 and HPS4). Interacts with CLN5. Interacts with APPL2. Interacts with F8A1/F8A2/F8A3. Found in a complex with F8A1/F8A2/F8A3, HTT and RAB5A; mediates the recruitment of HTT by RAB5A onto early endosomes. Interacts with ATP9A. Interacts with PPP1R21; mediates the recruitment of FERRY complex by RAB5A onto early endosomes. Mg(2+) is required as a cofactor. Phosphorylation of Ser-84 in the switch II region by LRRK2 prevents the association of RAB regulatory proteins, including RAB GDP dissociation inhibitors GDI1 and GDI2.

The protein localises to the cell membrane. Its subcellular location is the early endosome membrane. The protein resides in the melanosome. It localises to the cytoplasmic vesicle. It is found in the cell projection. The protein localises to the ruffle. Its subcellular location is the cytoplasm. The protein resides in the cytosol. It localises to the membrane. It is found in the phagosome membrane. The protein localises to the endosome membrane. It catalyses the reaction GTP + H2O = GDP + phosphate + H(+). With respect to regulation, regulated by guanine nucleotide exchange factors (GEFs) including RINL, which promote the exchange of bound GDP for free GTP. Regulated by GTPase activating proteins (GAPs) which increase the GTP hydrolysis activity. Inhibited by GDP dissociation inhibitors (GDIs). Functionally, the small GTPases Rab are key regulators of intracellular membrane trafficking, from the formation of transport vesicles to their fusion with membranes. Rabs cycle between an inactive GDP-bound form and an active GTP-bound form that is able to recruit to membranes different sets of downstream effectors directly responsible for vesicle formation, movement, tethering and fusion. RAB5A is required for the fusion of plasma membranes and early endosomes. Contributes to the regulation of filopodia extension. Required for the exosomal release of SDCBP, CD63, PDCD6IP and syndecan. Regulates maturation of apoptotic cell-containing phagosomes, probably downstream of DYN2 and PIK3C3. This is Ras-related protein Rab-5A (RAB5A) from Canis lupus familiaris (Dog).